The chain runs to 140 residues: Nucleoside diphosphate kinase (140 aa).

Positions 11, 59, 87, 93, 104, and 114 each coordinate ATP. His117 functions as the Pros-phosphohistidine intermediate in the catalytic mechanism.

It belongs to the NDK family. Homotetramer. It depends on Mg(2+) as a cofactor.

It localises to the cytoplasm. It catalyses the reaction a 2'-deoxyribonucleoside 5'-diphosphate + ATP = a 2'-deoxyribonucleoside 5'-triphosphate + ADP. The enzyme catalyses a ribonucleoside 5'-diphosphate + ATP = a ribonucleoside 5'-triphosphate + ADP. In terms of biological role, major role in the synthesis of nucleoside triphosphates other than ATP. The ATP gamma phosphate is transferred to the NDP beta phosphate via a ping-pong mechanism, using a phosphorylated active-site intermediate. This Azorhizobium caulinodans (strain ATCC 43989 / DSM 5975 / JCM 20966 / LMG 6465 / NBRC 14845 / NCIMB 13405 / ORS 571) protein is Nucleoside diphosphate kinase.